The following is a 374-amino-acid chain: Pectate lyase 1 (374 aa).

The signal sequence occupies residues 1–22 (MKYLLPSAAAGLLLLAAQPTMA). Cys-93 and Cys-176 are oxidised to a cystine. Ca(2+)-binding residues include Asp-150, Asp-152, Glu-187, and Asp-191. Arg-239 is a catalytic residue. Cys-350 and Cys-373 form a disulfide bridge.

It belongs to the polysaccharide lyase 1 family. PLADES subfamily. Requires Ca(2+) as cofactor.

Its subcellular location is the secreted. It carries out the reaction Eliminative cleavage of (1-&gt;4)-alpha-D-galacturonan to give oligosaccharides with 4-deoxy-alpha-D-galact-4-enuronosyl groups at their non-reducing ends.. The protein operates within glycan metabolism; pectin degradation; 2-dehydro-3-deoxy-D-gluconate from pectin: step 2/5. Functionally, involved in maceration and soft-rotting of plant tissue. The polypeptide is Pectate lyase 1 (pel1) (Pectobacterium carotovorum (Erwinia carotovora)).